The primary structure comprises 245 residues: 6-carboxyhexanoate--CoA ligase (245 aa).

It belongs to the BioW family. As to quaternary structure, homodimer. Requires Mg(2+) as cofactor.

The catalysed reaction is heptanedioate + ATP + CoA = 6-carboxyhexanoyl-CoA + AMP + diphosphate. The protein operates within metabolic intermediate metabolism; pimeloyl-CoA biosynthesis; pimeloyl-CoA from pimelate: step 1/1. Its function is as follows. Catalyzes the transformation of pimelate into pimeloyl-CoA with concomitant hydrolysis of ATP to AMP. This chain is 6-carboxyhexanoate--CoA ligase, found in Sulfurihydrogenibium azorense (strain DSM 15241 / OCM 825 / Az-Fu1).